Consider the following 301-residue polypeptide: Polyamine aminopropyltransferase (301 aa).

The 237-residue stretch at 4–240 (WHWLLEWQTP…GLWGFVYGGV (237 aa)) folds into the PABS domain. Gln33 contributes to the S-methyl-5'-thioadenosine binding site. Spermidine is bound by residues His64 and Glu89. S-methyl-5'-thioadenosine contacts are provided by residues Asp109 and 141 to 142 (DG). Catalysis depends on Asp159, which acts as the Proton acceptor.

It belongs to the spermidine/spermine synthase family. Homodimer or homotetramer.

The protein resides in the cytoplasm. It catalyses the reaction S-adenosyl 3-(methylsulfanyl)propylamine + putrescine = S-methyl-5'-thioadenosine + spermidine + H(+). It participates in amine and polyamine biosynthesis; spermidine biosynthesis; spermidine from putrescine: step 1/1. Functionally, catalyzes the irreversible transfer of a propylamine group from the amino donor S-adenosylmethioninamine (decarboxy-AdoMet) to putrescine (1,4-diaminobutane) to yield spermidine. In Saccharolobus islandicus (strain Y.N.15.51 / Yellowstone #2) (Sulfolobus islandicus), this protein is Polyamine aminopropyltransferase.